The chain runs to 916 residues: Transmembrane channel-like protein 2-A (916 aa).

The segment covering 1–13 (MPKKSDTTRKLED) has biased composition (basic and acidic residues). Residues 1–159 (MPKKSDTTRK…DEEDESMSEG (159 aa)) are disordered. The Cytoplasmic portion of the chain corresponds to 1–271 (MPKKSDTTRK…IFLRWMYGMN (271 aa)). Positions 14 to 26 (VGIEIDGDVDSAE) are enriched in acidic residues. 2 stretches are compositionally biased toward basic residues: residues 31–45 (SKGK…GKRG) and 62–72 (KGRRAANKKKP). Basic and acidic residues predominate over residues 97-107 (NVRERGDGDKK). Basic residues predominate over residues 108–117 (KSGKKGRRGG). Over residues 118–138 (KKNEKGKGKDSDKDSDKDEKK) the composition is skewed to basic and acidic residues. Over residues 145-157 (DESDSDEEDESMS) the composition is skewed to acidic residues. The helical transmembrane segment at 272–292 (LVLFSLTFGLVVIPEVLMGLP) threads the bilayer. Over 293 to 344 (YGSIPRKTVPREDQDTAMDYSVLTDFNGYCKYSVLFYGYYNNQRTIGFLKFR) the chain is Extracellular. The helical transmembrane segment at 345-365 (LPLSYLMVGIGTFGYSLMVVI) threads the bilayer. The Cytoplasmic segment spans residues 366–438 (RTMAKNADVG…ENIHLRRFLR (73 aa)). A helical membrane pass occupies residues 439–459 (VLANFLITCTLGGSGYLIYFV). Topologically, residues 460-478 (VKRSQEFQNMDNLSWYEKN) are extracellular. A helical membrane pass occupies residues 479 to 499 (ELEIIMSLLGLVGPMLFETIA). At 500 to 516 (ELEEYHPRIALKWQLGR) the chain is on the cytoplasmic side. Residues 517–537 (IFALFLGNLYTFLLALFDEVN) form a helical membrane-spanning segment. Residues 538–649 (AKLEEEESIK…EFDISGNVLG (112 aa)) are Extracellular-facing. Residues 650–670 (LVFNQGMIWMGAFYAPGLVGI) form a helical membrane-spanning segment. The Cytoplasmic segment spans residues 671-704 (NVLRLLSSMYYQCWAVMACNVPHERVFKASKSNN). The helical transmembrane segment at 705 to 725 (FYMGLLLLILFLSLLPVVYTI) threads the bilayer. Topologically, residues 726–762 (MSLPPSFDCGPFSGKERMFDVVMETIDLDLPAFMGTL) are extracellular. The chain crosses the membrane as a helical span at residues 763 to 783 (FGYVANPGLVISAVLLMVLAI). The Cytoplasmic portion of the chain corresponds to 784–916 (YYLNSVSEAY…RGQGPPPRRQ (133 aa)). Positions 804–818 (MQMARDEEKNRRNNK) are enriched in basic and acidic residues. Residues 804–916 (MQMARDEEKN…RGQGPPPRRQ (113 aa)) form a disordered region. The segment covering 883–892 (ARGPVTRAPG) has biased composition (low complexity).

This sequence belongs to the TMC family. In terms of assembly, interacts (via N-terminus) with both isoforms CD1 and CD3 of PCDH15A (via cytoplasmic domain); this interaction is required for mechanotransduction of the hair cells and correct localization of PCDH15A in hair bundles of the hair cells. In terms of tissue distribution, in adults, expression is restricted to the hair cells of inner ear and lateral line organ. Expressed at higher levels in the larval inner ear than in the lateral-line neuromasts.

The protein localises to the cell membrane. It carries out the reaction Ca(2+)(in) = Ca(2+)(out). Functionally, pore-forming subunit of the mechanotransducer (MET) non-selective cation channel complex located at tips of hair-cell stereocilia. Highly permeable to calcium and likely transports monovalent cations. The chain is Transmembrane channel-like protein 2-A from Danio rerio (Zebrafish).